The primary structure comprises 120 residues: uncharacterized protein (120 aa).

Its subcellular location is the virion. This is an uncharacterized protein from Acanthamoeba polyphaga mimivirus (APMV).